The chain runs to 376 residues: MPLPVQGNYTNFARLTNEQKTVWSLQFWRQARNAAFINMFLGTDANSMIQQITELRRDEKGARAVITLIADMVGDGVVGDNQLEGNEEALTAFDTVIQLDQMRAANVHEGRMADQRSIVNFRTTSRDMLAYWLADRMDQLAFLSLAGVSYAYRTNGALRGSSPFPNLTFAADVTPPSANRRLRWDGTNKVLVPNAATSDVTAADTPSYALLVNLKAYAKTKYIRGLRGDGGEEMYHVFLDPLAMAKLKLDPDYIANLRSGYTRGNVNPLFKGGIVTVDGLVIHEFRHVYNTRGMAPGAKWGASGNVDGCSMLFCGAQALGFADIGNPRWVEKEFDYDNKHGISVAKILGFLKPQFPSIYEDGNTEDFGVINVYVAA.

The protein resides in the virion. Functionally, assembles to form an icosahedral capsid. This chain is Major capsid protein, found in Pseudomonas aeruginosa (Bacteriophage KPP25).